Here is a 133-residue protein sequence, read N- to C-terminus: UPF0768 protein C977.18 (133 aa).

This sequence belongs to the UPF0768 family.

The sequence is that of UPF0768 protein C977.18 from Schizosaccharomyces pombe (strain 972 / ATCC 24843) (Fission yeast).